Reading from the N-terminus, the 912-residue chain is Protein translocase subunit SecA (912 aa).

ATP is bound by residues Gln87, 105–109 (GEGKT), and Asp508. The disordered stretch occupies residues 855–912 (QHQDAGGYGADEEVEQMQGGNAPVPVSQVTRDEPKVGRNDPCPCGSGKKYKHCHGQLS). Zn(2+) contacts are provided by Cys896, Cys898, Cys907, and His908. Residues 902 to 912 (KKYKHCHGQLS) show a composition bias toward basic residues.

The protein belongs to the SecA family. As to quaternary structure, monomer and homodimer. Part of the essential Sec protein translocation apparatus which comprises SecA, SecYEG and auxiliary proteins SecDF-YajC and YidC. Zn(2+) serves as cofactor.

It localises to the cell inner membrane. The protein resides in the cytoplasm. The catalysed reaction is ATP + H2O + cellular proteinSide 1 = ADP + phosphate + cellular proteinSide 2.. Functionally, part of the Sec protein translocase complex. Interacts with the SecYEG preprotein conducting channel. Has a central role in coupling the hydrolysis of ATP to the transfer of proteins into and across the cell membrane, serving both as a receptor for the preprotein-SecB complex and as an ATP-driven molecular motor driving the stepwise translocation of polypeptide chains across the membrane. The protein is Protein translocase subunit SecA of Xanthomonas campestris pv. campestris (strain B100).